We begin with the raw amino-acid sequence, 256 residues long: 3-hydroxy-5-phosphonooxypentane-2,4-dione thiolase (256 aa).

The active-site Schiff-base intermediate with substrate is Lys-168.

The protein belongs to the DeoC/FbaB aldolase family. Homodecamer.

It is found in the cytoplasm. The enzyme catalyses dihydroxyacetone phosphate + acetyl-CoA = 3-hydroxy-2,4-dioxopentyl phosphate + CoA. Functionally, involved in the degradation of phospho-AI-2, thereby terminating induction of the lsr operon and closing the AI-2 signaling cycle. Catalyzes the transfer of an acetyl moiety from 3-hydroxy-5-phosphonooxypentane-2,4-dione to CoA to form glycerone phosphate and acetyl-CoA. The polypeptide is 3-hydroxy-5-phosphonooxypentane-2,4-dione thiolase (lsrF) (Shigella flexneri serotype 5b (strain 8401)).